The following is a 276-amino-acid chain: MLEIHNLQKSYSTGDKALKGVNLSVQPGELLGLIGPSGAGKSTLIRCVNRLVEPSEGRVLLNGKDLANLGRHDLRMARRRIGMIFQEYALVERLTVMENLLSGRLGYSGFWPSWFRRFSPEDIRLAYALLERVGLDGMHNKRADALSGGQRQRVGIARALMQKPDLLLVDEPTASLDPKTSRQVMRLVLELCREHGLSAIINIHDVVLATEYLPRIVGLRAGAVVYDGPASAIDTHVLTRIYGAEDWSSITDRMTGTTVPGDEQAARVATIAIAAE.

Residues 2–246 (LEIHNLQKSY…VLTRIYGAED (245 aa)) form the ABC transporter domain. Residue 35-42 (GPSGAGKS) coordinates ATP.

The protein belongs to the ABC transporter superfamily. Phosphonates importer (TC 3.A.1.9.1) family. The complex is composed of two ATP-binding proteins (PhnC), two transmembrane proteins (PhnE) and a solute-binding protein (PhnD).

The protein resides in the cell inner membrane. The catalysed reaction is phosphonate(out) + ATP + H2O = phosphonate(in) + ADP + phosphate + H(+). In terms of biological role, part of the ABC transporter complex PhnCDE involved in phosphonates import. Responsible for energy coupling to the transport system. The sequence is that of Phosphonates import ATP-binding protein PhnC from Alcaligenes faecalis.